Consider the following 373-residue polypeptide: ATP phosphoribosyltransferase regulatory subunit (373 aa).

It belongs to the class-II aminoacyl-tRNA synthetase family. HisZ subfamily. As to quaternary structure, heteromultimer composed of HisG and HisZ subunits.

It localises to the cytoplasm. The protein operates within amino-acid biosynthesis; L-histidine biosynthesis; L-histidine from 5-phospho-alpha-D-ribose 1-diphosphate: step 1/9. In terms of biological role, required for the first step of histidine biosynthesis. May allow the feedback regulation of ATP phosphoribosyltransferase activity by histidine. The sequence is that of ATP phosphoribosyltransferase regulatory subunit from Rhizobium johnstonii (strain DSM 114642 / LMG 32736 / 3841) (Rhizobium leguminosarum bv. viciae).